The sequence spans 424 residues: Histidine--tRNA ligase (424 aa).

It belongs to the class-II aminoacyl-tRNA synthetase family. Homodimer.

Its subcellular location is the cytoplasm. It catalyses the reaction tRNA(His) + L-histidine + ATP = L-histidyl-tRNA(His) + AMP + diphosphate + H(+). In Escherichia coli (strain SE11), this protein is Histidine--tRNA ligase.